The chain runs to 1282 residues: ATP-dependent helicase/nuclease subunit A (1282 aa).

The region spanning 10 to 481 is the UvrD-like helicase ATP-binding domain; sequence SKWTDSQRQV…IELQENFRSS (472 aa). An ATP-binding site is contributed by 31-38; sequence AGAGAGKT. Residues 516 to 820 form the UvrD-like helicase C-terminal domain; the sequence is KPRELYLNED…RLMSIHKSKG (305 aa).

It belongs to the helicase family. AddA subfamily. As to quaternary structure, heterodimer of AddA and AddB/RexB. Mg(2+) is required as a cofactor.

It carries out the reaction Couples ATP hydrolysis with the unwinding of duplex DNA by translocating in the 3'-5' direction.. The catalysed reaction is ATP + H2O = ADP + phosphate + H(+). In terms of biological role, the heterodimer acts as both an ATP-dependent DNA helicase and an ATP-dependent, dual-direction single-stranded exonuclease. Recognizes the chi site generating a DNA molecule suitable for the initiation of homologous recombination. The AddA nuclease domain is required for chi fragment generation; this subunit has the helicase and 3' -&gt; 5' nuclease activities. The protein is ATP-dependent helicase/nuclease subunit A of Natranaerobius thermophilus (strain ATCC BAA-1301 / DSM 18059 / JW/NM-WN-LF).